The sequence spans 258 residues: Na(+)-translocating NADH-quinone reductase subunit C (258 aa).

The helical transmembrane segment at 14–34 (LIVVLAVSLICSVIVAGAVVG) threads the bilayer. The residue at position 226 (S226) is an FMN phosphoryl serine.

It belongs to the NqrC family. In terms of assembly, composed of six subunits; NqrA, NqrB, NqrC, NqrD, NqrE and NqrF. It depends on FMN as a cofactor.

The protein resides in the cell inner membrane. It catalyses the reaction a ubiquinone + n Na(+)(in) + NADH + H(+) = a ubiquinol + n Na(+)(out) + NAD(+). In terms of biological role, NQR complex catalyzes the reduction of ubiquinone-1 to ubiquinol by two successive reactions, coupled with the transport of Na(+) ions from the cytoplasm to the periplasm. NqrA to NqrE are probably involved in the second step, the conversion of ubisemiquinone to ubiquinol. This chain is Na(+)-translocating NADH-quinone reductase subunit C, found in Neisseria meningitidis serogroup B (strain ATCC BAA-335 / MC58).